We begin with the raw amino-acid sequence, 218 residues long: Large ribosomal subunit protein bL25 (218 aa).

It belongs to the bacterial ribosomal protein bL25 family. CTC subfamily. Part of the 50S ribosomal subunit; part of the 5S rRNA/L5/L18/L25 subcomplex. Contacts the 5S rRNA. Binds to the 5S rRNA independently of L5 and L18.

Functionally, this is one of the proteins that binds to the 5S RNA in the ribosome where it forms part of the central protuberance. The chain is Large ribosomal subunit protein bL25 from Gluconobacter oxydans (strain 621H) (Gluconobacter suboxydans).